A 186-amino-acid polypeptide reads, in one-letter code: Transcription factor FapR (186 aa).

Belongs to the FapR family.

Functionally, transcriptional factor involved in regulation of membrane lipid biosynthesis by repressing genes involved in fatty acid and phospholipid metabolism. This is Transcription factor FapR from Halalkalibacterium halodurans (strain ATCC BAA-125 / DSM 18197 / FERM 7344 / JCM 9153 / C-125) (Bacillus halodurans).